The primary structure comprises 628 residues: Vacuolar-sorting receptor 4 (628 aa).

The first 24 residues, 1-24, serve as a signal peptide directing secretion; sequence MKQLLCYLPWLLLLSLVVSPFNEA. Over 25–569 the chain is Lumenal; sequence RFVVEKNSLS…SKTGSQVKSA (545 aa). Residues 56-168 enclose the PA domain; the sequence is QYGGSMAGTV…GFGEKLKKAI (113 aa). Asparagine 148, asparagine 294, and asparagine 434 each carry an N-linked (GlcNAc...) asparagine glycan. EGF-like domains lie at 416–466 and 469–516; these read ETNE…SHCE and GPGR…KKCE. Disulfide bonds link cysteine 420-cysteine 438, cysteine 427-cysteine 447, cysteine 449-cysteine 465, cysteine 473-cysteine 493, cysteine 480-cysteine 501, cysteine 503-cysteine 515, and cysteine 545-cysteine 558. One can recognise an EGF-like 3; calcium-binding domain in the interval 517–559; sequence DINECKEKKACQCPECSCKNTWGSYECSCSGDLLYMRDHDTCI. Residues 570–590 form a helical membrane-spanning segment; it reads WAAVWLIMLSLGLAAAGAYLV. Over 591 to 628 the chain is Cytoplasmic; it reads YKYRLRQYMDSEIRAIMAQYMPLDSQPEVPNHTNDERA. Positions 610-613 match the Tyrosine-based internalization motif motif; the sequence is YMPL.

The protein belongs to the VSR (BP-80) family. In terms of tissue distribution, expressed at low levels in seeds, seedlings, roots, stems, leaves, flowers and siliques.

The protein resides in the membrane. Its subcellular location is the golgi apparatus membrane. It is found in the cytoplasmic vesicle. It localises to the clathrin-coated vesicle membrane. The protein localises to the prevacuolar compartment membrane. Its function is as follows. Vacuolar-sorting receptor (VSR) involved in clathrin-coated vesicles sorting from Golgi apparatus to vacuoles. This is Vacuolar-sorting receptor 4 (VSR4) from Arabidopsis thaliana (Mouse-ear cress).